The following is a 441-amino-acid chain: Phenylalanine-4-hydroxylase (441 aa).

The 80-residue stretch at 23–102 (FSISKGSDKI…KATTLQESSN (80 aa)) folds into the ACT domain. Residues His273, His278, and Glu318 each contribute to the Fe cation site.

Belongs to the biopterin-dependent aromatic amino acid hydroxylase family. As to quaternary structure, homotetramer. It depends on Fe(2+) as a cofactor.

The enzyme catalyses (6R)-L-erythro-5,6,7,8-tetrahydrobiopterin + L-phenylalanine + O2 = (4aS,6R)-4a-hydroxy-L-erythro-5,6,7,8-tetrahydrobiopterin + L-tyrosine. It carries out the reaction (6R)-L-erythro-5,6,7,8-tetrahydrobiopterin + L-tryptophan + O2 = 5-hydroxy-L-tryptophan + (4aS,6R)-4a-hydroxy-L-erythro-5,6,7,8-tetrahydrobiopterin. Its pathway is amino-acid degradation; L-phenylalanine degradation; acetoacetate and fumarate from L-phenylalanine: step 1/6. In terms of biological role, catalyzes the hydroxylation of L-phenylalanine. Hydroxylates L-tryptophan to 5-hydroxy-L-tryptophan but does not hydroxylate L-tyrosine to L-DOPA. It uses D-threo-tetrahydrodictyopterin (DH4), also known as dictyoperin, as a cofactor. This Dictyostelium discoideum (Social amoeba) protein is Phenylalanine-4-hydroxylase (pah).